Reading from the N-terminus, the 396-residue chain is Tryptophan synthase beta chain (396 aa).

At Lys-88 the chain carries N6-(pyridoxal phosphate)lysine.

Belongs to the TrpB family. In terms of assembly, tetramer of two alpha and two beta chains. Pyridoxal 5'-phosphate is required as a cofactor.

The catalysed reaction is (1S,2R)-1-C-(indol-3-yl)glycerol 3-phosphate + L-serine = D-glyceraldehyde 3-phosphate + L-tryptophan + H2O. Its pathway is amino-acid biosynthesis; L-tryptophan biosynthesis; L-tryptophan from chorismate: step 5/5. Functionally, the beta subunit is responsible for the synthesis of L-tryptophan from indole and L-serine. This chain is Tryptophan synthase beta chain, found in Shewanella baltica (strain OS155 / ATCC BAA-1091).